The following is an 80-amino-acid chain: MKDNVHPSYNDVVFHDVTSDFKILTRSTMSSKETVKWEDGQDYPLIKVEISSASHPFYTGKHKVIDTGGRIDKFQKRYAR.

It belongs to the bacterial ribosomal protein bL31 family. Type B subfamily. In terms of assembly, part of the 50S ribosomal subunit.

This Xanthomonas campestris pv. campestris (strain 8004) protein is Large ribosomal subunit protein bL31B.